The sequence spans 154 residues: 3-hydroxyacyl-[acyl-carrier-protein] dehydratase FabZ (154 aa).

Residue His60 is part of the active site.

It belongs to the thioester dehydratase family. FabZ subfamily.

It localises to the cytoplasm. The enzyme catalyses a (3R)-hydroxyacyl-[ACP] = a (2E)-enoyl-[ACP] + H2O. Its function is as follows. Involved in unsaturated fatty acids biosynthesis. Catalyzes the dehydration of short chain beta-hydroxyacyl-ACPs and long chain saturated and unsaturated beta-hydroxyacyl-ACPs. The chain is 3-hydroxyacyl-[acyl-carrier-protein] dehydratase FabZ from Haemophilus ducreyi (strain 35000HP / ATCC 700724).